We begin with the raw amino-acid sequence, 202 residues long: Small ribosomal subunit protein uS4 (202 aa).

The S4 RNA-binding domain occupies 91 to 154 (SMLSSVLYNS…VNLPSVLAAI (64 aa)).

Belongs to the universal ribosomal protein uS4 family. As to quaternary structure, part of the 30S ribosomal subunit. Contacts protein S5. The interaction surface between S4 and S5 is involved in control of translational fidelity.

Its function is as follows. One of the primary rRNA binding proteins, it binds directly to 16S rRNA where it nucleates assembly of the body of the 30S subunit. Functionally, with S5 and S12 plays an important role in translational accuracy. This Ehrlichia ruminantium (strain Gardel) protein is Small ribosomal subunit protein uS4.